Consider the following 177-residue polypeptide: PLAC8-like protein 1 (177 aa).

The protein belongs to the cornifelin family.

This Homo sapiens (Human) protein is PLAC8-like protein 1 (PLAC8L1).